A 584-amino-acid polypeptide reads, in one-letter code: Proline--tRNA ligase (584 aa).

The interval 242 to 261 is disordered; that stretch reads APPASNPEERPATQVHDTPD.

It belongs to the class-II aminoacyl-tRNA synthetase family. ProS type 1 subfamily. Homodimer.

Its subcellular location is the cytoplasm. The enzyme catalyses tRNA(Pro) + L-proline + ATP = L-prolyl-tRNA(Pro) + AMP + diphosphate. Functionally, catalyzes the attachment of proline to tRNA(Pro) in a two-step reaction: proline is first activated by ATP to form Pro-AMP and then transferred to the acceptor end of tRNA(Pro). As ProRS can inadvertently accommodate and process non-cognate amino acids such as alanine and cysteine, to avoid such errors it has two additional distinct editing activities against alanine. One activity is designated as 'pretransfer' editing and involves the tRNA(Pro)-independent hydrolysis of activated Ala-AMP. The other activity is designated 'posttransfer' editing and involves deacylation of mischarged Ala-tRNA(Pro). The misacylated Cys-tRNA(Pro) is not edited by ProRS. In Salinispora arenicola (strain CNS-205), this protein is Proline--tRNA ligase.